The chain runs to 202 residues: 7-methyl-GTP pyrophosphatase (202 aa).

Residue Asp-70 is the Proton acceptor of the active site.

This sequence belongs to the Maf family. YceF subfamily. A divalent metal cation is required as a cofactor.

The protein localises to the cytoplasm. The enzyme catalyses N(7)-methyl-GTP + H2O = N(7)-methyl-GMP + diphosphate + H(+). Its function is as follows. Nucleoside triphosphate pyrophosphatase that hydrolyzes 7-methyl-GTP (m(7)GTP). May have a dual role in cell division arrest and in preventing the incorporation of modified nucleotides into cellular nucleic acids. This chain is 7-methyl-GTP pyrophosphatase, found in Pseudoalteromonas translucida (strain TAC 125).